A 450-amino-acid chain; its full sequence is Tubulin alpha-4 chain (450 aa).

Gln-11 is a binding site for GTP. Lys-40 carries the N6-acetyllysine modification. GTP is bound by residues Glu-71, Gly-144, Thr-145, Thr-179, Asn-206, and Asn-228. Glu-71 contacts Mg(2+). The active site involves Glu-254. The segment at 431 to 450 is disordered; it reads DYEEVGAESGEGDEGDEEEY.

This sequence belongs to the tubulin family. As to quaternary structure, dimer of alpha and beta chains. A typical microtubule is a hollow water-filled tube with an outer diameter of 25 nm and an inner diameter of 15 nM. Alpha-beta heterodimers associate head-to-tail to form protofilaments running lengthwise along the microtubule wall with the beta-tubulin subunit facing the microtubule plus end conferring a structural polarity. Microtubules usually have 13 protofilaments but different protofilament numbers can be found in some organisms and specialized cells. Mg(2+) serves as cofactor. Post-translationally, undergoes a tyrosination/detyrosination cycle, the cyclic removal and re-addition of a C-terminal tyrosine residue by the enzymes tubulin tyrosine carboxypeptidase (TTCP) and tubulin tyrosine ligase (TTL), respectively. Acetylation of alpha chains at Lys-40 stabilizes microtubules and affects affinity and processivity of microtubule motors. This modification has a role in multiple cellular functions, ranging from cell motility, cell cycle progression or cell differentiation to intracellular trafficking and signaling.

The protein localises to the cytoplasm. Its subcellular location is the cytoskeleton. It catalyses the reaction GTP + H2O = GDP + phosphate + H(+). Tubulin is the major constituent of microtubules, a cylinder consisting of laterally associated linear protofilaments composed of alpha- and beta-tubulin heterodimers. Microtubules grow by the addition of GTP-tubulin dimers to the microtubule end, where a stabilizing cap forms. Below the cap, tubulin dimers are in GDP-bound state, owing to GTPase activity of alpha-tubulin. This chain is Tubulin alpha-4 chain, found in Gossypium hirsutum (Upland cotton).